We begin with the raw amino-acid sequence, 338 residues long: Phenylalanine--tRNA ligase alpha subunit (338 aa).

Glutamate 252 contributes to the Mg(2+) binding site.

This sequence belongs to the class-II aminoacyl-tRNA synthetase family. Phe-tRNA synthetase alpha subunit type 1 subfamily. As to quaternary structure, tetramer of two alpha and two beta subunits. Mg(2+) serves as cofactor.

The protein localises to the cytoplasm. The enzyme catalyses tRNA(Phe) + L-phenylalanine + ATP = L-phenylalanyl-tRNA(Phe) + AMP + diphosphate + H(+). The chain is Phenylalanine--tRNA ligase alpha subunit from Pseudomonas syringae pv. tomato (strain ATCC BAA-871 / DC3000).